Consider the following 347-residue polypeptide: MNHYFRAIGSMLILVYSTFFAIFFIDKVFVNIMYFQGMFYTQIFGIPVLLFLNLMVILLCIIVGSVLAYKINQQNHWLKDQIERSIEGQTVGINDQNIELYNETIELYQTLVPLNQEVHKLRMKTQNLTNESYNINDVKVKKIIEDERQRLARELHDSVSQQLFAASMMLSAIKETELKAPLDQQIPVLEKMIQDSQLEMRALLLHLRPIGLKDKSLGEGIKDLVVDLQKKVPMKVVHDIEEFKVPKGIEDHLFRITQEAISNTLRHSKGTKVTIELFNREEYLLLRIQDNGKGFNVDDKVEQSYGLKNMRERALEIGATFHIVSLPDAGTRIEVKAPLNKEDSNAD.

2 helical membrane passes run 13–33 (ILVY…VNIM) and 43–63 (IFGI…CIIV). In terms of domain architecture, Histidine kinase spans 150-341 (RLARELHDSV…RIEVKAPLNK (192 aa)).

The protein resides in the cell membrane. It carries out the reaction ATP + protein L-histidine = ADP + protein N-phospho-L-histidine.. Member of the two-component regulatory system VraS/VraR involved in the control of the cell wall peptidoglycan biosynthesis. Probably activates VraR by phosphorylation. The sequence is that of Sensor protein VraS (vraS) from Staphylococcus saprophyticus subsp. saprophyticus (strain ATCC 15305 / DSM 20229 / NCIMB 8711 / NCTC 7292 / S-41).